We begin with the raw amino-acid sequence, 317 residues long: Methionyl-tRNA formyltransferase (317 aa).

112 to 115 (SLLP) is a (6S)-5,6,7,8-tetrahydrofolate binding site.

The protein belongs to the Fmt family.

It carries out the reaction L-methionyl-tRNA(fMet) + (6R)-10-formyltetrahydrofolate = N-formyl-L-methionyl-tRNA(fMet) + (6S)-5,6,7,8-tetrahydrofolate + H(+). In terms of biological role, attaches a formyl group to the free amino group of methionyl-tRNA(fMet). The formyl group appears to play a dual role in the initiator identity of N-formylmethionyl-tRNA by promoting its recognition by IF2 and preventing the misappropriation of this tRNA by the elongation apparatus. The chain is Methionyl-tRNA formyltransferase from Mesorhizobium japonicum (strain LMG 29417 / CECT 9101 / MAFF 303099) (Mesorhizobium loti (strain MAFF 303099)).